The following is a 207-amino-acid chain: Cyclic di-AMP synthase CdaS (207 aa).

Positions 13 to 37 (AFKGKIQVYLEQILGDASLILKTLH) form a coiled coil. A DAC domain is found at 63–205 (SFYLQSYIEE…DGVLYPLISP (143 aa)).

Belongs to the adenylate cyclase family. DacB/CdaS subfamily. In terms of assembly, forms dimers and probably also hexamers; the dimer may be active while the hexamer may not be active.

The enzyme catalyses 2 ATP = 3',3'-c-di-AMP + 2 diphosphate. Its function is as follows. One of 3 paralogous diadenylate cyclases (DAC) in this bacteria, catalyzing the condensation of 2 ATP molecules into cyclic di-AMP (c-di-AMP). Upon expression in E.coli leads to c-di-AMP synthesis. Overexpression of the hyperactive mutant (L44F) in the absence of c-di-AMP phosphodiesterase GdpP leads to growth defects in log phase (long curly cell filaments) that disappear upon sporulation; spore formation is normal, showing sporulation is insensitive to the excess c-di-AMP. In B.subtilis c-di-AMP is a second messenger that mediates growth, DNA repair and cell wall homeostasis; it is toxic when present in excess. The polypeptide is Cyclic di-AMP synthase CdaS (Bacillus subtilis (strain 168)).